Consider the following 161-residue polypeptide: Small ribosomal subunit protein uS9 (161 aa).

The tract at residues Met1–Tyr38 is disordered. Positions Gln27–Tyr38 are enriched in basic and acidic residues.

The protein belongs to the universal ribosomal protein uS9 family.

The chain is Small ribosomal subunit protein uS9 from Rhodospirillum centenum (strain ATCC 51521 / SW).